A 340-amino-acid polypeptide reads, in one-letter code: Probable dual-specificity RNA methyltransferase RlmN (340 aa).

Glu-93 (proton acceptor) is an active-site residue. Residues 99–327 (TAKRLTVCVS…VSVRYSRGLE (229 aa)) enclose the Radical SAM core domain. Cysteines 106 and 332 form a disulfide. Residues Cys-113, Cys-117, and Cys-120 each coordinate [4Fe-4S] cluster. Residues 160 to 161 (GE), Ser-190, 213 to 215 (SLH), and Asn-289 each bind S-adenosyl-L-methionine. Cys-332 acts as the S-methylcysteine intermediate in catalysis.

This sequence belongs to the radical SAM superfamily. RlmN family. [4Fe-4S] cluster is required as a cofactor.

Its subcellular location is the cytoplasm. The catalysed reaction is adenosine(2503) in 23S rRNA + 2 reduced [2Fe-2S]-[ferredoxin] + 2 S-adenosyl-L-methionine = 2-methyladenosine(2503) in 23S rRNA + 5'-deoxyadenosine + L-methionine + 2 oxidized [2Fe-2S]-[ferredoxin] + S-adenosyl-L-homocysteine. It catalyses the reaction adenosine(37) in tRNA + 2 reduced [2Fe-2S]-[ferredoxin] + 2 S-adenosyl-L-methionine = 2-methyladenosine(37) in tRNA + 5'-deoxyadenosine + L-methionine + 2 oxidized [2Fe-2S]-[ferredoxin] + S-adenosyl-L-homocysteine. Functionally, specifically methylates position 2 of adenine 2503 in 23S rRNA and position 2 of adenine 37 in tRNAs. In Rippkaea orientalis (strain PCC 8801 / RF-1) (Cyanothece sp. (strain PCC 8801)), this protein is Probable dual-specificity RNA methyltransferase RlmN.